The primary structure comprises 141 residues: Putative pre-16S rRNA nuclease (141 aa).

This sequence belongs to the YqgF nuclease family.

Its subcellular location is the cytoplasm. In terms of biological role, could be a nuclease involved in processing of the 5'-end of pre-16S rRNA. This chain is Putative pre-16S rRNA nuclease, found in Shewanella oneidensis (strain ATCC 700550 / JCM 31522 / CIP 106686 / LMG 19005 / NCIMB 14063 / MR-1).